Consider the following 470-residue polypeptide: MSQNIGKISQVIGAVIDVEFEPGKLPPIYNALRVTNPAIDDNENNLVLEVAQHLGENSVRTIAMDSTDGLVRGQAVLDTGKQISVPVGRKTLGRILNVIGEPVDEMGPVNADKEYGIHREAPEFVDQSTKVEAFTTGIKVVDLLAPYARGGKIGLFGGAGVGKTVLIMELINNIAKQHGGFSVFAGVGERTREGNDLWMEMKESGVLDKAALVYGQMNEPPGARARVALSALSIAEYFRDEEGQNVLLFIDNIFRFTQAGSEVSALLGRIPSAVGYQPTLATEMGELQERITSTNKGSITSVQAIYVPADDLTDPAPATAFAHLDATTVLSRQIAELGIYPAVDPLDSTSRILDPQVIGEEHYAIARQVQYVLQKYKDLQDIIAILGMDELSEEDKLVVARARKIQRFLSQPFHVAEAFTGSPGKYVELKDTIKGFKEIVDGKHDDIPEQAFYMVGTIEEAIEKAKKLAV.

Position 157–164 (157–164 (GGAGVGKT)) interacts with ATP.

The protein belongs to the ATPase alpha/beta chains family. F-type ATPases have 2 components, CF(1) - the catalytic core - and CF(0) - the membrane proton channel. CF(1) has five subunits: alpha(3), beta(3), gamma(1), delta(1), epsilon(1). CF(0) has three main subunits: a(1), b(2) and c(9-12). The alpha and beta chains form an alternating ring which encloses part of the gamma chain. CF(1) is attached to CF(0) by a central stalk formed by the gamma and epsilon chains, while a peripheral stalk is formed by the delta and b chains.

The protein resides in the cell inner membrane. The catalysed reaction is ATP + H2O + 4 H(+)(in) = ADP + phosphate + 5 H(+)(out). Produces ATP from ADP in the presence of a proton gradient across the membrane. The catalytic sites are hosted primarily by the beta subunits. In Geotalea daltonii (strain DSM 22248 / JCM 15807 / FRC-32) (Geobacter daltonii), this protein is ATP synthase subunit beta.